We begin with the raw amino-acid sequence, 550 residues long: Putative pentatricopeptide repeat-containing protein At5g37570 (550 aa).

12 PPR repeats span residues 73 to 107 (GTYL…GLAR), 109 to 143 (DEYT…GFDK), 144 to 174 (DVVV…MPER), 175 to 205 (NAVS…MPER), 206 to 240 (NLGS…DIIS), 241 to 267 (YTSM…ARGV), 268 to 302 (DVRA…NVKP), 303 to 333 (DEFI…LHQR), 339 to 369 (SHYV…MPQR), 370 to 404 (DLVS…GIVP), 405 to 435 (DEVA…MRKK), and 441 to 475 (SPDH…AHAS). The segment at 476–550 (AWGSLLGGCS…KICGRSWISR (75 aa)) is type E motif.

Belongs to the PPR family. PCMP-E subfamily.

The protein is Putative pentatricopeptide repeat-containing protein At5g37570 (PCMP-E37) of Arabidopsis thaliana (Mouse-ear cress).